The following is a 74-amino-acid chain: MAHPSQLGLQDAASPVMEELLHFHDHALMIVFLISTLVLYIIVAMVSTKLTDKYTIDSQEIEIVWTVLPAVILI.

Over 1-14 (MAHPSQLGLQDAAS) the chain is Mitochondrial intermembrane. A helical transmembrane segment spans residues 15–45 (PVMEELLHFHDHALMIVFLISTLVLYIIVAM). At 46–74 (VSTKLTDKYTIDSQEIEIVWTVLPAVILI) the chain is on the mitochondrial matrix side.

The protein belongs to the cytochrome c oxidase subunit 2 family. As to quaternary structure, component of the cytochrome c oxidase (complex IV, CIV), a multisubunit enzyme composed of 14 subunits. The complex is composed of a catalytic core of 3 subunits MT-CO1, MT-CO2 and MT-CO3, encoded in the mitochondrial DNA, and 11 supernumerary subunits COX4I, COX5A, COX5B, COX6A, COX6B, COX6C, COX7A, COX7B, COX7C, COX8 and NDUFA4, which are encoded in the nuclear genome. The complex exists as a monomer or a dimer and forms supercomplexes (SCs) in the inner mitochondrial membrane with NADH-ubiquinone oxidoreductase (complex I, CI) and ubiquinol-cytochrome c oxidoreductase (cytochrome b-c1 complex, complex III, CIII), resulting in different assemblies (supercomplex SCI(1)III(2)IV(1) and megacomplex MCI(2)III(2)IV(2)). Found in a complex with TMEM177, COA6, COX18, COX20, SCO1 and SCO2. Interacts with TMEM177 in a COX20-dependent manner. Interacts with COX20. Interacts with COX16. The cofactor is Cu cation.

It localises to the mitochondrion inner membrane. It catalyses the reaction 4 Fe(II)-[cytochrome c] + O2 + 8 H(+)(in) = 4 Fe(III)-[cytochrome c] + 2 H2O + 4 H(+)(out). Functionally, component of the cytochrome c oxidase, the last enzyme in the mitochondrial electron transport chain which drives oxidative phosphorylation. The respiratory chain contains 3 multisubunit complexes succinate dehydrogenase (complex II, CII), ubiquinol-cytochrome c oxidoreductase (cytochrome b-c1 complex, complex III, CIII) and cytochrome c oxidase (complex IV, CIV), that cooperate to transfer electrons derived from NADH and succinate to molecular oxygen, creating an electrochemical gradient over the inner membrane that drives transmembrane transport and the ATP synthase. Cytochrome c oxidase is the component of the respiratory chain that catalyzes the reduction of oxygen to water. Electrons originating from reduced cytochrome c in the intermembrane space (IMS) are transferred via the dinuclear copper A center (CU(A)) of subunit 2 and heme A of subunit 1 to the active site in subunit 1, a binuclear center (BNC) formed by heme A3 and copper B (CU(B)). The BNC reduces molecular oxygen to 2 water molecules using 4 electrons from cytochrome c in the IMS and 4 protons from the mitochondrial matrix. The chain is Cytochrome c oxidase subunit 2 (mt-co2) from Megalops atlanticus (Tarpon).